A 123-amino-acid chain; its full sequence is Defensin beta 118 (123 aa).

Positions 1-19 are cleaved as a signal peptide; that stretch reads MKLLLLALPVLVLLPQVIP. 3 disulfides stabilise this stretch: cysteine 27–cysteine 54, cysteine 34–cysteine 48, and cysteine 38–cysteine 55. Positions 65–123 are excised as a propeptide; sequence VPMTSPTPLSDSTPGIIDDILTVRFTTDYFEVSSKKDMVEESEAGRGTETSLPNVHHSS. Over residues 100-110 the composition is skewed to basic and acidic residues; that stretch reads KDMVEESEAGR. The interval 100–123 is disordered; sequence KDMVEESEAGRGTETSLPNVHHSS. Polar residues predominate over residues 112-123; sequence TETSLPNVHHSS.

The protein belongs to the beta-defensin family. In terms of processing, the three-dimensional structure formed by the three intramolecular disulfide bridges is indispensable for antimicrobial activity.

It is found in the secreted. Functionally, host defense peptide that exhibits antimicrobial activity against both Gram-negative bacteria, such as E.coli and S.typhimurium, and Gram-positive bacteria, such as S.aureus and B.subtilis. Inhibits cell adhesion of E.coli on intestinal epithelial enterocytes. Causes rapid permeabilization of both the outer and inner membrane of E.coli, leading to morphological alterations on the bacterial surface. Binds to bacterial lipopolysaccharides (LPS) with high affinity, and may thereby be involved in immunoregulation through LPS neutralization. May contribute to epididymal innate immunity and protect the sperm against attack by microorganisms. The sequence is that of Defensin beta 118 (DEFB118) from Pan troglodytes (Chimpanzee).